A 145-amino-acid chain; its full sequence is Transcriptional regulator MraZ (145 aa).

2 consecutive SpoVT-AbrB domains span residues 5–49 (TYNH…LESE) and 78–121 (TYKI…AKEV).

Belongs to the MraZ family. As to quaternary structure, forms oligomers.

The protein localises to the cytoplasm. The protein resides in the nucleoid. The chain is Transcriptional regulator MraZ from Ureaplasma parvum serovar 3 (strain ATCC 27815 / 27 / NCTC 11736).